The primary structure comprises 160 residues: Cyclic pyranopterin monophosphate synthase (160 aa).

Substrate contacts are provided by residues 73–75 (LCH) and 110–111 (ME). Asp-125 is a catalytic residue.

This sequence belongs to the MoaC family. In terms of assembly, homohexamer; trimer of dimers.

It carries out the reaction (8S)-3',8-cyclo-7,8-dihydroguanosine 5'-triphosphate = cyclic pyranopterin phosphate + diphosphate. Its pathway is cofactor biosynthesis; molybdopterin biosynthesis. Its function is as follows. Catalyzes the conversion of (8S)-3',8-cyclo-7,8-dihydroguanosine 5'-triphosphate to cyclic pyranopterin monophosphate (cPMP). The protein is Cyclic pyranopterin monophosphate synthase of Pseudomonas paraeruginosa (strain DSM 24068 / PA7) (Pseudomonas aeruginosa (strain PA7)).